The primary structure comprises 267 residues: GTP cyclohydrolase FolE2 (267 aa).

The protein belongs to the GTP cyclohydrolase IV family.

It catalyses the reaction GTP + H2O = 7,8-dihydroneopterin 3'-triphosphate + formate + H(+). The protein operates within cofactor biosynthesis; 7,8-dihydroneopterin triphosphate biosynthesis; 7,8-dihydroneopterin triphosphate from GTP: step 1/1. Its function is as follows. Converts GTP to 7,8-dihydroneopterin triphosphate. The sequence is that of GTP cyclohydrolase FolE2 from Nitrosococcus oceani (strain ATCC 19707 / BCRC 17464 / JCM 30415 / NCIMB 11848 / C-107).